The following is a 381-amino-acid chain: V-type proton ATPase subunit C 1-B (381 aa).

Position 2 is an N-acetylthreonine (T2).

The protein belongs to the V-ATPase C subunit family. In terms of assembly, V-ATPase is a heteromultimeric enzyme made up of two complexes: the ATP-hydrolytic V1 complex and the proton translocation V0 complex. The V1 complex consists of three catalytic AB heterodimers that form a heterohexamer, three peripheral stalks each consisting of EG heterodimers, one central rotor including subunits D and F, and the regulatory subunits C and H. The proton translocation complex V0 consists of the proton transport subunit a, a ring of proteolipid subunits c9c'', rotary subunit d, subunits e and f, and two accessory subunits.

Its function is as follows. Subunit of the V1 complex of vacuolar(H+)-ATPase (V-ATPase), a multisubunit enzyme composed of a peripheral complex (V1) that hydrolyzes ATP and a membrane integral complex (V0) that translocates protons. V-ATPase is responsible for acidifying and maintaining the pH of intracellular compartments and in some cell types, is targeted to the plasma membrane, where it is responsible for acidifying the extracellular environment. Subunit C is necessary for the assembly of the catalytic sector of the enzyme and is likely to have a specific function in its catalytic activity. This Danio rerio (Zebrafish) protein is V-type proton ATPase subunit C 1-B (atp6v1c1b).